A 73-amino-acid chain; its full sequence is Defensin-like protein 6 (73 aa).

A signal peptide spans 1 to 26; sequence MENKFFAAFFLLLVLFSSQEIIGGEG. 4 disulfides stabilise this stretch: cysteine 29–cysteine 73, cysteine 40–cysteine 60, cysteine 46–cysteine 67, and cysteine 50–cysteine 69.

The protein belongs to the DEFL family.

The protein localises to the secreted. Functionally, confers broad-spectrum resistance to pathogens. The chain is Defensin-like protein 6 (PDF2.5) from Arabidopsis thaliana (Mouse-ear cress).